The following is a 272-amino-acid chain: uncharacterized protein (272 aa).

Positions 20-133 constitute an AB hydrolase-1 domain; that stretch reads PVLIFIPGAN…PPINTFLPDS (114 aa).

This sequence belongs to the AB hydrolase superfamily.

This is an uncharacterized protein from Staphylococcus aureus (strain MSSA476).